The sequence spans 86 residues: Precursor of CEP4 (86 aa).

The signal sequence occupies residues Met-1 to Ala-30. The propeptide occupies Ala-31–Asp-64. The tract at residues Gln-63–Pro-86 is disordered. 2 positions are modified to hydroxyproline: Pro-68 and Pro-73. The propeptide occupies Lys-80–Pro-86.

It belongs to the C-terminally encoded plant signaling peptide (CEP) family. Interacts with CEP receptors (e.g. CEPR1 and CEPR2). Post-translationally, the mature small signaling peptide is generated by proteolytic processing of the longer precursor. In terms of tissue distribution, expressed at low levels in flowers. Present in lateral roots, shoot apical meristem (SAM), flowers and siliques.

It localises to the secreted. The protein localises to the extracellular space. It is found in the apoplast. In terms of biological role, extracellular signaling peptide that represses primary root growth rate. Promotes shoot growth and modulates leaf morphology. Regulates systemic nitrogen (N)-demand signaling. Mediates up-regulation of genes involved in N uptake and assimilation pathways. This Arabidopsis thaliana (Mouse-ear cress) protein is Precursor of CEP4.